The chain runs to 338 residues: Nucleoid-associated protein CGSHiGG_07705 (338 aa).

The protein belongs to the YejK family.

Its subcellular location is the cytoplasm. The protein localises to the nucleoid. In Haemophilus influenzae (strain PittGG), this protein is Nucleoid-associated protein CGSHiGG_07705.